The following is a 272-amino-acid chain: Replication-associated protein A (272 aa).

One can recognise a CRESS-DNA virus Rep endonuclease domain in the interval 11–114; it reads SHRNANTFLT…PLAVFERGTF (104 aa). The short motif at 18–21 is the RCR-1 element; the sequence is FLTY. A divalent metal cation-binding residues include Glu-52, His-60, and His-62. The short motif at 60-62 is the RCR-2 element; it reads HLH. Tyr-100 functions as the For DNA cleavage activity in the catalytic mechanism. Residues 100–103 carry the RCR-3 motif; sequence YILK. Glu-104 lines the a divalent metal cation pocket. Residues 175 to 187 are oligomerization; the sequence is SANKLFPEIQEEF. The binding to RBR1 stretch occupies residues 198–202; it reads LLCNE. The segment at 221–230 is transactivation; sequence MLLQPACYTL. Positions 245-272 are disordered; sequence SHQMKDQESRASTSSAQQEQENLLGPEA. The segment covering 254 to 265 has biased composition (polar residues); it reads RASTSSAQQEQE.

Belongs to the geminiviridae Rep protein family. In terms of assembly, homooligomer. Interacts with host retinoblastoma-related protein 1 (RBR1), and may thereby deregulate the host cell cycle. Part of the C- and V-complexes which are RepA-Rep-DNA complexes involved in the c-sense and v-sense transcription. The cofactor is Mg(2+). Mn(2+) is required as a cofactor.

It is found in the host nucleus. The protein localises to the host cytoplasm. In terms of biological role, implicated in enhancement of V-sense gene expression. Acts a an inhibitor of C-sense gene transcription. The polypeptide is Replication-associated protein A (Avena sativa (Oat)).